Reading from the N-terminus, the 34-residue chain is MSDIN-like toxin proprotein 4 (34 aa).

Residues 1 to 10 (MSDINTARLP) constitute a propeptide that is removed on maturation. A cross-link (cyclopeptide (Leu-Pro)) is located at residues 11 to 20 (LFLPPVRMPP). Residues 21 to 34 (CVGDDIEMVLTRGE) constitute a propeptide that is removed on maturation.

It belongs to the MSDIN fungal toxin family. Processed by the macrocyclase-peptidase enzyme POPB to yield a toxic cyclic decapeptide. POPB first removes 10 residues from the N-terminus. Conformational trapping of the remaining peptide forces the enzyme to release this intermediate rather than proceed to macrocyclization. The enzyme rebinds the remaining peptide in a different conformation and catalyzes macrocyclization of the N-terminal 10 residues.

Functionally, probable toxin that belongs to the MSDIN-like toxin family responsible for a large number of food poisoning cases and deaths. This Amanita bisporigera (Destroying angel) protein is MSDIN-like toxin proprotein 4.